Here is a 346-residue protein sequence, read N- to C-terminus: Uroporphyrinogen decarboxylase (346 aa).

Substrate is bound by residues 23–27, Asp73, Tyr151, Ser206, and His321; that span reads RQAGR.

Belongs to the uroporphyrinogen decarboxylase family. As to quaternary structure, homodimer.

The protein resides in the cytoplasm. The enzyme catalyses uroporphyrinogen III + 4 H(+) = coproporphyrinogen III + 4 CO2. The protein operates within porphyrin-containing compound metabolism; protoporphyrin-IX biosynthesis; coproporphyrinogen-III from 5-aminolevulinate: step 4/4. Functionally, catalyzes the decarboxylation of four acetate groups of uroporphyrinogen-III to yield coproporphyrinogen-III. This chain is Uroporphyrinogen decarboxylase, found in Aliarcobacter butzleri (strain RM4018) (Arcobacter butzleri).